Consider the following 284-residue polypeptide: Distal membrane arm assembly component 2 (284 aa).

This sequence belongs to the ATP synthase subunit s family. In terms of assembly, associates with mitochondrial complex I assembly intermediates during its biogenesis.

Involved in the assembly of the mitochondrial membrane respiratory chain NADH dehydrogenase (Complex I). The chain is Distal membrane arm assembly component 2 from Drosophila melanogaster (Fruit fly).